The following is a 113-amino-acid chain: Photosystem II reaction center Psb28 protein (113 aa).

The protein belongs to the Psb28 family. As to quaternary structure, part of the photosystem II complex.

The protein resides in the cellular thylakoid membrane. The chain is Photosystem II reaction center Psb28 protein from Trichodesmium erythraeum (strain IMS101).